The following is a 155-amino-acid chain: Ribonuclease H (155 aa).

An RNase H type-1 domain is found at 1–142 (MLKQVEIFTD…CDELARAAAM (142 aa)). D10, E48, D70, and D134 together coordinate Mg(2+).

It belongs to the RNase H family. In terms of assembly, monomer. Requires Mg(2+) as cofactor.

It localises to the cytoplasm. It carries out the reaction Endonucleolytic cleavage to 5'-phosphomonoester.. Functionally, endonuclease that specifically degrades the RNA of RNA-DNA hybrids. This Citrobacter koseri (strain ATCC BAA-895 / CDC 4225-83 / SGSC4696) protein is Ribonuclease H.